The primary structure comprises 318 residues: Homeobox protein Nkx-2.5 (318 aa).

A DNA-binding region (homeobox) is located at residues 137–196 (RRKPRVLFSQAQVYELERRFKQQRYLSPAERDQLASVLKLTSTQVKIWFQNRRYKCKRQR).

It belongs to the NK-2 homeobox family. Homodimer (via the homeobox); binds DNA as homodimer. Interacts (via the homeobox) with TBX5 (via the T-box); this complex binds DNA. Interacts with HIPK1 and HIPK2, but not HIPK3. Interacts with the C-terminal zinc finger of GATA4 through its homeobox domain. Also interacts with JARID2 which represses its ability to activate transcription of ANF. Interacts with FBLIM1. Interacts with TBX18. Interacts with histone methyltransferase NSD2 (via HMG box). Interacts with NEDD9. Interacts with TBX1.

The protein localises to the nucleus. Its function is as follows. Transcription factor required for the development of the heart and the spleen. During heart development, acts as a transcriptional activator of NPPA/ANF in cooperation with GATA4. May cooperate with TBX2 to negatively modulate expression of NPPA/ANF in the atrioventricular canal. Binds to the core DNA motif of NPPA promoter. Together with PBX1, required for spleen development through a mechanism that involves CDKN2B repression. Positively regulates transcription of genes such as COL3A1 and MMP2, resulting in increased pulmonary endothelial fibrosis in response to hypoxia. The chain is Homeobox protein Nkx-2.5 (Nkx2-5) from Rattus norvegicus (Rat).